Reading from the N-terminus, the 651-residue chain is Acetyl-coenzyme A synthetase (651 aa).

CoA contacts are provided by residues 191-194 (RGGK), Thr311, and Asn335. Residues 387-389 (GEP), 411-416 (DTWWQT), Asp500, and Arg515 each bind ATP. Ser523 serves as a coordination point for CoA. An ATP-binding site is contributed by Arg526. Mg(2+) is bound by residues Val537, His539, and Val542. A CoA-binding site is contributed by Arg584. At Lys609 the chain carries N6-acetyllysine.

It belongs to the ATP-dependent AMP-binding enzyme family. Requires Mg(2+) as cofactor. Post-translationally, acetylated. Deacetylation by the SIR2-homolog deacetylase activates the enzyme.

The catalysed reaction is acetate + ATP + CoA = acetyl-CoA + AMP + diphosphate. Functionally, catalyzes the conversion of acetate into acetyl-CoA (AcCoA), an essential intermediate at the junction of anabolic and catabolic pathways. AcsA undergoes a two-step reaction. In the first half reaction, AcsA combines acetate with ATP to form acetyl-adenylate (AcAMP) intermediate. In the second half reaction, it can then transfer the acetyl group from AcAMP to the sulfhydryl group of CoA, forming the product AcCoA. The protein is Acetyl-coenzyme A synthetase of Pseudomonas syringae pv. syringae (strain B728a).